The primary structure comprises 431 residues: Guanine nucleotide exchange factor rei-2 (431 aa).

Over residues 1 to 21 (MDETATSSEVTETFVSDPTTR) the composition is skewed to polar residues. Positions 1–28 (MDETATSSEVTETFVSDPTTRQFEEDGH) are disordered. Coiled-coil stretches lie at residues 149 to 171 (EVLN…AESL) and 214 to 247 (LEAQ…RISE). The segment at 249 to 298 (IHEERSTGSLESAVSSDQEDQKSDFKSSESLPGNPPPYAPTAPPPYEDKY) is disordered. Positions 255 to 264 (TGSLESAVSS) are enriched in polar residues. Residues 281–293 (GNPPPYAPTAPPP) are compositionally biased toward pro residues.

Belongs to the SH3BP5 family. As to quaternary structure, interacts with rab-11.1. Binds preferentially to the GDP-bound form of rab-11.1.

Its function is as follows. Guanine nucleotide exchange factor for Rab GTPase Rab-11.1. May spatially and temporally regulate the distribution of Rab-11.1 to target membranes during embryogenesis. May play a role in cytokinesis, probably by targeting rab-11.1 to the cleavage furrows. This Caenorhabditis elegans protein is Guanine nucleotide exchange factor rei-2.